The following is a 602-amino-acid chain: Glutamine--fructose-6-phosphate aminotransferase [isomerizing] (602 aa).

C2 serves as the catalytic Nucleophile; for GATase activity. The Glutamine amidotransferase type-2 domain maps to 2-217 (CGIVGVVGNT…DQELVIVKAD (216 aa)). Positions 67–87 (IGHTRWATHGKPTEDNAHPHR) are disordered. A compositionally biased stretch (basic and acidic residues) spans 77 to 87 (KPTEDNAHPHR). SIS domains follow at residues 283 to 422 (IIKA…ANGN) and 455 to 592 (VREL…VDKP). The active-site For Fru-6P isomerization activity is K597.

As to quaternary structure, homodimer.

It is found in the cytoplasm. It carries out the reaction D-fructose 6-phosphate + L-glutamine = D-glucosamine 6-phosphate + L-glutamate. Catalyzes the first step in hexosamine metabolism, converting fructose-6P into glucosamine-6P using glutamine as a nitrogen source. The protein is Glutamine--fructose-6-phosphate aminotransferase [isomerizing] of Streptococcus pneumoniae serotype 4 (strain ATCC BAA-334 / TIGR4).